The chain runs to 1291 residues: 1-phosphatidylinositol 4,5-bisphosphate phosphodiesterase gamma-1 (1291 aa).

Position 2 is an N-acetylalanine (A2). Positions 27–142 (RSLEVGTVMT…WIRGLTWLME (116 aa)) constitute a PH 1 domain. Residues 152-187 (QIERWLRKQFYSVDRNREDRISAKDLKNMLSQVNYR) form the EF-hand domain. Positions 165, 167, 169, 171, and 176 each coordinate Ca(2+). Residues 320 to 464 (DTMNNPLSHY…LKRKILIKHK (145 aa)) form the PI-PLC X-box domain. Residues H335 and H380 contribute to the active site. A PH 2; first part domain is found at 489-523 (SIKNGILYLEDPVNHEWYPHYFVLTSSKIYYSEET). Residue Y506 is modified to Phosphotyrosine. A disordered region spans residues 522–544 (ETSSDQGNEDEEEPKEASGSTEL). 2 SH2 domains span residues 550-657 (WFHG…SEPV) and 668-756 (WYHA…RYPI). Residue Y771 is modified to Phosphotyrosine; by SYK. Residues Y775 and Y783 each carry the phosphotyrosine modification. At Y783 the chain carries Phosphotyrosine; by ITK, SYK and TXK. The region spanning 791-851 (TFKCAVKALF…PSNYVEEMVS (61 aa)) is the SH3 domain. Residues 895 to 931 (FVFSISMASVAHWSLDVAADSQEELQDWVKKIREVAQ) enclose the PH 2; second part domain. Residues 953 to 1070 (LSELVVYCRP…GYVLQPSVMR (118 aa)) enclose the PI-PLC Y-box domain. Y977 bears the Phosphotyrosine mark. A C2 domain is found at 1071-1194 (DEAFDPFDKS…TGYRAVPLKN (124 aa)). Phosphoserine occurs at positions 1222, 1228, and 1249. Y1254 is modified (phosphotyrosine). A Phosphoserine modification is found at S1264. Residues 1271-1291 (HFDGRDRRTPRRTRVNGDNRL) are disordered.

Interacts with AGAP2 via its SH3 domain. Interacts (via SH2 domain) with RET. Interacts with FLT1 (tyrosine-phosphorylated). Interacts (via SH2 domain) with FGFR1, FGFR2, FGFR3 and FGFR4 (phosphorylated). Interacts with LAT (phosphorylated) upon TCR activation. Interacts (via SH3 domain) with the Pro-rich domain of TNK1. Associates with BLNK, VAV1, GRB2 and NCK1 in a B-cell antigen receptor-dependent fashion. Interacts with CBLB in activated T-cells; which inhibits phosphorylation. Interacts with SHB. Interacts (via SH3 domain) with the Arg/Gly-rich-flanked Pro-rich domains of KHDRBS1/SAM68. This interaction is selectively regulated by arginine methylation of KHDRBS1/SAM68. Interacts with INPP5D/SHIP1, THEMIS and CLNK. Interacts with AXL, FLT4 and KIT. Interacts with RALGPS1. Interacts (via the SH2 domains) with VIL1 (phosphorylated at C-terminus tyrosine phosphorylation sites). Interacts (via SH2 domain) with PDGFRA and PDGFRB (tyrosine phosphorylated). Interacts with PIP5K1C. Interacts with NTRK1 and NTRK2 (phosphorylated upon ligand-binding). Interacts with SYK; activates PLCG1. Interacts with GRB2, LAT and THEMIS upon TCR activation in thymocytes. Interacts with TESPA1; the association is increased with prolonged stimulation of the TCR and may facilitate the assembly of the LAT signalosome. Interacts (via C-terminal proline-rich domain (PRD)) with PLCG1 (via SH3 domain); this interaction leads to guanine nucleotide exchange from PlCG1 to DNM1 and enhances DNM1-dependent endocytosis. Requires Ca(2+) as cofactor. Ubiquitinated by CBLB in activated T-cells. In terms of processing, tyrosine phosphorylated in response to signaling via activated FLT3, KIT and PDGFRA. Tyrosine phosphorylated by activated FGFR1, FGFR2, FGFR3 and FGFR4. Tyrosine phosphorylated by activated FLT1 and KDR. Tyrosine phosphorylated by activated PDGFRB. The receptor-mediated activation of PLCG1 involves its phosphorylation by tyrosine kinases, in response to ligation of a variety of growth factor receptors and immune system receptors. For instance, SYK phosphorylates and activates PLCG1 in response to ligation of the B-cell receptor. May be dephosphorylated by PTPRJ. Phosphorylated by ITK and TXK on Tyr-783 upon TCR activation in T-cells.

The protein resides in the cell projection. The protein localises to the lamellipodium. It localises to the ruffle. The catalysed reaction is a 1,2-diacyl-sn-glycero-3-phospho-(1D-myo-inositol-4,5-bisphosphate) + H2O = 1D-myo-inositol 1,4,5-trisphosphate + a 1,2-diacyl-sn-glycerol + H(+). It carries out the reaction a 1,2-diacyl-sn-glycero-3-phospho-(1D-myo-inositol) + H2O = 1D-myo-inositol 1-phosphate + a 1,2-diacyl-sn-glycerol + H(+). Activated by phosphorylation on tyrosine residues. In terms of biological role, mediates the production of the second messenger molecules diacylglycerol (DAG) and inositol 1,4,5-trisphosphate (IP3). Plays an important role in the regulation of intracellular signaling cascades. Becomes activated in response to ligand-mediated activation of receptor-type tyrosine kinases, such as PDGFRA, PDGFRB, EGFR, FGFR1, FGFR2, FGFR3 and FGFR4. Plays a role in actin reorganization and cell migration. Guanine nucleotide exchange factor that binds the GTPase DNM1 and catalyzes the dissociation of GDP, allowing a GTP molecule to bind in its place, therefore enhancing DNM1-dependent endocytosis. This chain is 1-phosphatidylinositol 4,5-bisphosphate phosphodiesterase gamma-1, found in Bos taurus (Bovine).